Consider the following 194-residue polypeptide: dITP/XTP pyrophosphatase (194 aa).

11–16 (SHNAGK) provides a ligand contact to substrate. Asp-70 serves as the catalytic Proton acceptor. Asp-70 contacts Mg(2+). Substrate contacts are provided by residues Ser-71, 149–152 (FGYD), Lys-172, and 177–178 (HR).

The protein belongs to the HAM1 NTPase family. In terms of assembly, homodimer. Mg(2+) serves as cofactor.

The catalysed reaction is XTP + H2O = XMP + diphosphate + H(+). The enzyme catalyses dITP + H2O = dIMP + diphosphate + H(+). It catalyses the reaction ITP + H2O = IMP + diphosphate + H(+). Pyrophosphatase that catalyzes the hydrolysis of nucleoside triphosphates to their monophosphate derivatives, with a high preference for the non-canonical purine nucleotides XTP (xanthosine triphosphate), dITP (deoxyinosine triphosphate) and ITP. Seems to function as a house-cleaning enzyme that removes non-canonical purine nucleotides from the nucleotide pool, thus preventing their incorporation into DNA/RNA and avoiding chromosomal lesions. The sequence is that of dITP/XTP pyrophosphatase from Thermosynechococcus vestitus (strain NIES-2133 / IAM M-273 / BP-1).